The following is a 430-amino-acid chain: Adenylosuccinate synthetase (430 aa).

Residues 13–19 (GDEGKGK) and 41–43 (GHT) contribute to the GTP site. Asp14 serves as the catalytic Proton acceptor. Mg(2+) contacts are provided by Asp14 and Gly41. IMP-binding positions include 14–17 (DEGK), 39–42 (NAGH), Thr130, Arg144, Gln225, Thr240, and Arg304. His42 acts as the Proton donor in catalysis. Position 300-306 (300-306 (ASTGRPR)) interacts with substrate. GTP is bound by residues Arg306, 332–334 (KLD), and 414–416 (STG).

Belongs to the adenylosuccinate synthetase family. Homodimer. Mg(2+) is required as a cofactor.

The protein resides in the cytoplasm. The catalysed reaction is IMP + L-aspartate + GTP = N(6)-(1,2-dicarboxyethyl)-AMP + GDP + phosphate + 2 H(+). It participates in purine metabolism; AMP biosynthesis via de novo pathway; AMP from IMP: step 1/2. In terms of biological role, plays an important role in the de novo pathway of purine nucleotide biosynthesis. Catalyzes the first committed step in the biosynthesis of AMP from IMP. The chain is Adenylosuccinate synthetase from Xylella fastidiosa (strain 9a5c).